The sequence spans 149 residues: Protein TraJ (149 aa).

The protein resides in the cell membrane. Functionally, this protein is essential for positively regulating the expression of transfer genes that are involved in the conjugal transfer of DNA between bacterial cells. The protein is Protein TraJ (traJ) of Escherichia coli.